The following is an 855-amino-acid chain: DNA mismatch repair protein MutS (855 aa).

613-620 (GPNMGGKS) contributes to the ATP binding site. Residues 796–817 (TTSLPHEQPRAKPGKPAIPQQS) are disordered.

The protein belongs to the DNA mismatch repair MutS family.

In terms of biological role, this protein is involved in the repair of mismatches in DNA. It is possible that it carries out the mismatch recognition step. This protein has a weak ATPase activity. The protein is DNA mismatch repair protein MutS of Pseudomonas syringae pv. tomato (strain ATCC BAA-871 / DC3000).